The chain runs to 198 residues: Holliday junction branch migration complex subunit RuvA (198 aa).

The segment at methionine 1–leucine 64 is domain I. The segment at aspartate 65–alanine 141 is domain II. Residues alanine 141–valine 145 are flexible linker. The segment at alanine 146–arginine 198 is domain III.

This sequence belongs to the RuvA family. As to quaternary structure, homotetramer. Forms an RuvA(8)-RuvB(12)-Holliday junction (HJ) complex. HJ DNA is sandwiched between 2 RuvA tetramers; dsDNA enters through RuvA and exits via RuvB. An RuvB hexamer assembles on each DNA strand where it exits the tetramer. Each RuvB hexamer is contacted by two RuvA subunits (via domain III) on 2 adjacent RuvB subunits; this complex drives branch migration. In the full resolvosome a probable DNA-RuvA(4)-RuvB(12)-RuvC(2) complex forms which resolves the HJ.

It is found in the cytoplasm. Functionally, the RuvA-RuvB-RuvC complex processes Holliday junction (HJ) DNA during genetic recombination and DNA repair, while the RuvA-RuvB complex plays an important role in the rescue of blocked DNA replication forks via replication fork reversal (RFR). RuvA specifically binds to HJ cruciform DNA, conferring on it an open structure. The RuvB hexamer acts as an ATP-dependent pump, pulling dsDNA into and through the RuvAB complex. HJ branch migration allows RuvC to scan DNA until it finds its consensus sequence, where it cleaves and resolves the cruciform DNA. The sequence is that of Holliday junction branch migration complex subunit RuvA from Acidobacterium capsulatum (strain ATCC 51196 / DSM 11244 / BCRC 80197 / JCM 7670 / NBRC 15755 / NCIMB 13165 / 161).